Here is a 297-residue protein sequence, read N- to C-terminus: uncharacterized protein (297 aa).

A run of 5 helical transmembrane segments spans residues 114–136, 150–170, 197–217, 227–247, and 269–289; these read YNRW…LSSG, LLYD…VFNV, MPIV…GVHL, AFTV…KAMI, and FINT…PGLL.

The protein belongs to the ThrE exporter (TC 2.A.79) family.

It localises to the cell inner membrane. This is an uncharacterized protein from Haemophilus influenzae (strain ATCC 51907 / DSM 11121 / KW20 / Rd).